Here is a 123-residue protein sequence, read N- to C-terminus: Large ribosomal subunit protein bL12 (123 aa).

It belongs to the bacterial ribosomal protein bL12 family. In terms of assembly, homodimer. Part of the ribosomal stalk of the 50S ribosomal subunit. Forms a multimeric L10(L12)X complex, where L10 forms an elongated spine to which 2 to 4 L12 dimers bind in a sequential fashion. Binds GTP-bound translation factors.

Its function is as follows. Forms part of the ribosomal stalk which helps the ribosome interact with GTP-bound translation factors. Is thus essential for accurate translation. This is Large ribosomal subunit protein bL12 from Finegoldia magna (strain ATCC 29328 / DSM 20472 / WAL 2508) (Peptostreptococcus magnus).